The following is a 118-amino-acid chain: Large ribosomal subunit protein uL18 (118 aa).

It belongs to the universal ribosomal protein uL18 family. In terms of assembly, part of the 50S ribosomal subunit; part of the 5S rRNA/L5/L18/L25 subcomplex. Contacts the 5S and 23S rRNAs.

In terms of biological role, this is one of the proteins that bind and probably mediate the attachment of the 5S RNA into the large ribosomal subunit, where it forms part of the central protuberance. This is Large ribosomal subunit protein uL18 from Helicobacter pylori (strain J99 / ATCC 700824) (Campylobacter pylori J99).